Reading from the N-terminus, the 199-residue chain is Protein Thf1 (199 aa).

A coiled-coil region spans residues Gln167–Thr198.

It belongs to the THF1 family.

In terms of biological role, may be involved in photosynthetic membrane biogenesis. The protein is Protein Thf1 of Prochlorococcus marinus (strain NATL1A).